We begin with the raw amino-acid sequence, 625 residues long: Threonine--tRNA ligase (625 aa).

Residues 1–147 (MRILLIHSDY…TIVPGEAKKE (147 aa)) form an editing domain region. Residues 206-505 (PHVKIMLEQE…MKKGKKPMYP (300 aa)) form a catalytic region. Positions 298, 350, and 474 each coordinate Zn(2+).

It belongs to the class-II aminoacyl-tRNA synthetase family. In terms of assembly, homodimer. The cofactor is Zn(2+).

Its subcellular location is the cytoplasm. The enzyme catalyses tRNA(Thr) + L-threonine + ATP = L-threonyl-tRNA(Thr) + AMP + diphosphate + H(+). Functionally, catalyzes the attachment of threonine to tRNA(Thr) in a two-step reaction: L-threonine is first activated by ATP to form Thr-AMP and then transferred to the acceptor end of tRNA(Thr). Also edits incorrectly charged L-seryl-tRNA(Thr). The polypeptide is Threonine--tRNA ligase (Thermococcus sibiricus (strain DSM 12597 / MM 739)).